The primary structure comprises 112 residues: Nucleoid-associated protein FTH_1374 (112 aa).

The interval 1–27 (MNFDMSKLMQQAQKMQEQMKKAQQERE) is disordered. Over residues 17–27 (EQMKKAQQERE) the composition is skewed to basic and acidic residues.

Belongs to the YbaB/EbfC family. Homodimer.

The protein localises to the cytoplasm. It localises to the nucleoid. Functionally, binds to DNA and alters its conformation. May be involved in regulation of gene expression, nucleoid organization and DNA protection. The sequence is that of Nucleoid-associated protein FTH_1374 from Francisella tularensis subsp. holarctica (strain OSU18).